The primary structure comprises 492 residues: Serine/threonine-protein kinase 3 (492 aa).

The Protein kinase domain occupies 26-277 (FDVLEKLGEG…ATQLLQHPFI (252 aa)). Residues 32-40 (LGEGSYGSV) and lysine 55 each bind ATP. The Proton acceptor role is filled by aspartate 145. Residue threonine 179 is modified to Phosphothreonine; by autocatalysis. Coiled coils occupy residues 286–328 (LRDL…TMVK) and 443–476 (NLDFEELQMRLTALDPMMEREIEELRQRYTAKRQ). A compositionally biased stretch (basic and acidic residues) spans 297–307 (KAKRQQEQQRE). Residues 297–339 (KAKRQQEQQRELEEDDENSEEEVEVDSHTMVKSGSESAGTMRA) are disordered. The span at 308–320 (LEEDDENSEEEVE) shows a compositional bias: acidic residues. Residues 326–339 (MVKSGSESAGTMRA) show a composition bias toward polar residues. The SARAH domain occupies 438 to 485 (FDFLKNLDFEELQMRLTALDPMMEREIEELRQRYTAKRQPILDAMDAK).

Belongs to the protein kinase superfamily. STE Ser/Thr protein kinase family. STE20 subfamily. As to quaternary structure, homodimer; mediated via the coiled-coil region. Requires Mg(2+) as cofactor.

The protein localises to the cytoplasm. It localises to the nucleus. It catalyses the reaction L-seryl-[protein] + ATP = O-phospho-L-seryl-[protein] + ADP + H(+). The enzyme catalyses L-threonyl-[protein] + ATP = O-phospho-L-threonyl-[protein] + ADP + H(+). With respect to regulation, inhibited by the C-terminal non-catalytic region. Activated by caspase-cleavage. Full activation also requires homodimerization and autophosphorylation of Thr-179. Its function is as follows. Stress-activated, pro-apoptotic kinase which, following caspase-cleavage, enters the nucleus and induces chromatin condensation followed by internucleosomal DNA fragmentation. Key component of the Hippo signaling pathway which plays a pivotal role in organ size control and tumor suppression by restricting proliferation and promoting apoptosis. The core of this pathway is composed of a kinase cascade wherein stk3/mst2 and stk4/mst1, in complex with its regulatory protein sav1, phosphorylates and activates lats1/2 in complex with its regulatory protein mob1, which in turn phosphorylates and inactivates yap1 oncoprotein and wwtr1/taz. Phosphorylation of yap1 by lats2 inhibits its translocation into the nucleus to regulate cellular genes important for cell proliferation, cell death, and cell migration. The sequence is that of Serine/threonine-protein kinase 3 (stk3) from Danio rerio (Zebrafish).